The primary structure comprises 189 residues: Probable nicotinate-nucleotide adenylyltransferase (189 aa).

It belongs to the NadD family.

The catalysed reaction is nicotinate beta-D-ribonucleotide + ATP + H(+) = deamido-NAD(+) + diphosphate. It functions in the pathway cofactor biosynthesis; NAD(+) biosynthesis; deamido-NAD(+) from nicotinate D-ribonucleotide: step 1/1. Functionally, catalyzes the reversible adenylation of nicotinate mononucleotide (NaMN) to nicotinic acid adenine dinucleotide (NaAD). This Cereibacter sphaeroides (strain ATCC 17023 / DSM 158 / JCM 6121 / CCUG 31486 / LMG 2827 / NBRC 12203 / NCIMB 8253 / ATH 2.4.1.) (Rhodobacter sphaeroides) protein is Probable nicotinate-nucleotide adenylyltransferase.